The chain runs to 786 residues: Endonuclease MutS2 (786 aa).

ATP is bound at residue 335 to 342 (GPNTGGKT). One can recognise a Smr domain in the interval 711–786 (LDLRGERFEN…GLGVTVVELK (76 aa)).

This sequence belongs to the DNA mismatch repair MutS family. MutS2 subfamily. In terms of assembly, homodimer. Binds to stalled ribosomes, contacting rRNA.

Functionally, endonuclease that is involved in the suppression of homologous recombination and thus may have a key role in the control of bacterial genetic diversity. Acts as a ribosome collision sensor, splitting the ribosome into its 2 subunits. Detects stalled/collided 70S ribosomes which it binds and splits by an ATP-hydrolysis driven conformational change. Acts upstream of the ribosome quality control system (RQC), a ribosome-associated complex that mediates the extraction of incompletely synthesized nascent chains from stalled ribosomes and their subsequent degradation. Probably generates substrates for RQC. The polypeptide is Endonuclease MutS2 (Bacillus cytotoxicus (strain DSM 22905 / CIP 110041 / 391-98 / NVH 391-98)).